The sequence spans 690 residues: ATP-dependent DNA helicase Hel308 (690 aa).

ATP contacts are provided by residues Q26 and 45-52 (IPTASGKT). A Helicase ATP-binding domain is found at 32 to 188 (AGYLESEDNY…WLDARVVEHD (157 aa)). Residues 133–136 (DEFH) carry the DEAH box motif. Residues 208 to 417 (EKNDVVLKVL…NRDALYRQII (210 aa)) form the Helicase C-terminal domain.

The protein belongs to the helicase family. Hel308 subfamily. As to quaternary structure, monomer. Binds replication protein A (RPA), in presence and absence of DNA.

The enzyme catalyses Couples ATP hydrolysis with the unwinding of duplex DNA by translocating in the 3'-5' direction.. It carries out the reaction ATP + H2O = ADP + phosphate + H(+). In terms of biological role, DNA-dependent ATPase and 3'-5' DNA helicase that may be involved in repair of stalled replication forks. Helicase with 3'-to 5'- polarity; able to unwind over 100 bp of DNA at 50 degrees Celsius. Unwinds forked DNA, preferentially on lagging strand forks; has weaker activity on Holliday junctions. Displaces the invading strand in DNA D-loops. Unwinds short oligonucleotides from dsDNA with 3'- but not blunt ends or 5'-ssDNA tails in an ATP-dependent manner. ATPase activity is stimulated by ssDNA but not dsDNA, protein binds ssDNA, dsDNA with 5'- or 3'-overhangs but not blunt ended dsDNA and replication forks. Replication forks bind both this protein and RPA. RPA does not stimulate the helicase activity of this protein. This is ATP-dependent DNA helicase Hel308 from Methanothermobacter thermautotrophicus (strain ATCC 29096 / DSM 1053 / JCM 10044 / NBRC 100330 / Delta H) (Methanobacterium thermoautotrophicum).